The primary structure comprises 640 residues: Threonine--tRNA ligase (640 aa).

The 61-residue stretch at 1-61 (MPIITLPDGS…DRDATLQIIT (61 aa)) folds into the TGS domain. The interval 242–533 (DHRRIGKQLD…LIEHYAGAFP (292 aa)) is catalytic. 3 residues coordinate Zn(2+): cysteine 333, histidine 384, and histidine 510.

The protein belongs to the class-II aminoacyl-tRNA synthetase family. Homodimer. The cofactor is Zn(2+).

It localises to the cytoplasm. The enzyme catalyses tRNA(Thr) + L-threonine + ATP = L-threonyl-tRNA(Thr) + AMP + diphosphate + H(+). In terms of biological role, catalyzes the attachment of threonine to tRNA(Thr) in a two-step reaction: L-threonine is first activated by ATP to form Thr-AMP and then transferred to the acceptor end of tRNA(Thr). Also edits incorrectly charged L-seryl-tRNA(Thr). This Pseudomonas aeruginosa (strain LESB58) protein is Threonine--tRNA ligase.